A 354-amino-acid polypeptide reads, in one-letter code: NADH-quinone oxidoreductase subunit H (354 aa).

8 helical membrane passes run 25-45 (LVRILVVAVVILLCVAYLILW), 91-111 (WLYLIAPVMTVVPAFAVWAVI), 126-146 (LLYAMAISSIGVYAVILAGWA), 170-190 (MGFALVLVLMTAGSLNLSEIV), 205-225 (FLSWNWLPLLPVFVIYFISGI), 253-273 (MAFALFFLAEYINMIVISALA), 290-310 (FIPGIFWLVLKVFALLSVFIW), and 330-350 (VFLPVCVFWVIVVGFWMMSPL).

The protein belongs to the complex I subunit 1 family. As to quaternary structure, NDH-1 is composed of 14 different subunits. Subunits NuoA, H, J, K, L, M, N constitute the membrane sector of the complex.

Its subcellular location is the cell inner membrane. It catalyses the reaction a quinone + NADH + 5 H(+)(in) = a quinol + NAD(+) + 4 H(+)(out). Its function is as follows. NDH-1 shuttles electrons from NADH, via FMN and iron-sulfur (Fe-S) centers, to quinones in the respiratory chain. The immediate electron acceptor for the enzyme in this species is believed to be ubiquinone. Couples the redox reaction to proton translocation (for every two electrons transferred, four hydrogen ions are translocated across the cytoplasmic membrane), and thus conserves the redox energy in a proton gradient. This subunit may bind ubiquinone. The chain is NADH-quinone oxidoreductase subunit H from Burkholderia thailandensis (strain ATCC 700388 / DSM 13276 / CCUG 48851 / CIP 106301 / E264).